The chain runs to 258 residues: NH(3)-dependent NAD(+) synthetase (258 aa).

ATP is bound at residue 34-41 (GLSGGIDS). Residue Asp40 participates in Mg(2+) binding. Arg116 serves as a coordination point for deamido-NAD(+). Thr136 contacts ATP. Glu141 provides a ligand contact to Mg(2+). ATP-binding residues include Lys165 and Ser187.

The protein belongs to the NAD synthetase family. As to quaternary structure, homodimer.

The catalysed reaction is deamido-NAD(+) + NH4(+) + ATP = AMP + diphosphate + NAD(+) + H(+). It participates in cofactor biosynthesis; NAD(+) biosynthesis; NAD(+) from deamido-NAD(+) (ammonia route): step 1/1. Functionally, catalyzes the ATP-dependent amidation of deamido-NAD to form NAD. Uses ammonia as a nitrogen source. In Fusobacterium nucleatum subsp. nucleatum (strain ATCC 25586 / DSM 15643 / BCRC 10681 / CIP 101130 / JCM 8532 / KCTC 2640 / LMG 13131 / VPI 4355), this protein is NH(3)-dependent NAD(+) synthetase.